Here is a 238-residue protein sequence, read N- to C-terminus: Ribonuclease HII (238 aa).

Positions 12–197 (GIVAGVDEAG…VLELLTDDLL (186 aa)) constitute an RNase H type-2 domain. The a divalent metal cation site is built by Asp-18, Glu-19, and Asp-107.

It belongs to the RNase HII family. Mn(2+) serves as cofactor. Requires Mg(2+) as cofactor.

It localises to the cytoplasm. It carries out the reaction Endonucleolytic cleavage to 5'-phosphomonoester.. Functionally, endonuclease that specifically degrades the RNA of RNA-DNA hybrids. This Thermotoga petrophila (strain ATCC BAA-488 / DSM 13995 / JCM 10881 / RKU-1) protein is Ribonuclease HII.